We begin with the raw amino-acid sequence, 174 residues long: ATP synthase subunit d, mitochondrial (174 aa).

The residue at position 2 (Ser2) is an N-acetylserine.

It belongs to the ATPase d subunit family.

It localises to the mitochondrion inner membrane. Mitochondrial membrane ATP synthase (F(1)F(0) ATP synthase or Complex V) produces ATP from ADP in the presence of a proton gradient across the membrane which is generated by electron transport complexes of the respiratory chain. F-type ATPases consist of two structural domains, F(1) - containing the extramembraneous catalytic core, and F(0) - containing the membrane proton channel, linked together by a central stalk and a peripheral stalk. During catalysis, ATP synthesis in the catalytic domain of F(1) is coupled via a rotary mechanism of the central stalk subunits to proton translocation. Part of the complex F(0) domain and the peripheric stalk, which acts as a stator to hold the catalytic alpha(3)beta(3) subcomplex and subunit a/ATP6 static relative to the rotary elements. In Kluyveromyces lactis (strain ATCC 8585 / CBS 2359 / DSM 70799 / NBRC 1267 / NRRL Y-1140 / WM37) (Yeast), this protein is ATP synthase subunit d, mitochondrial (ATP7).